The primary structure comprises 294 residues: Protease HtpX homolog (294 aa).

Helical transmembrane passes span V12 to F32 and S34 to W54. Residue H138 coordinates Zn(2+). E139 is an active-site residue. H142 is a Zn(2+) binding site. 2 helical membrane passes run S152–G172 and L188–I208. E213 contacts Zn(2+).

This sequence belongs to the peptidase M48B family. Zn(2+) serves as cofactor.

The protein localises to the cell membrane. The chain is Protease HtpX homolog from Kineococcus radiotolerans (strain ATCC BAA-149 / DSM 14245 / SRS30216).